A 120-amino-acid polypeptide reads, in one-letter code: Transmembrane protein 010R (120 aa).

The next 2 membrane-spanning stretches (helical) occupy residues 40–60 (FCGA…ATAT) and 72–92 (SIFF…VWFL).

The protein belongs to the IIV-6 010R family.

It localises to the membrane. This Invertebrate iridescent virus 6 (IIV-6) protein is Transmembrane protein 010R.